A 442-amino-acid polypeptide reads, in one-letter code: MANSHVAVLAFPFGSHGQAILAVTRRLATAAPSTVFSFLNTSQSNFSLLSSDLPPNIRVHDVSDGVPEGYVLSRNPQEAVELFLEAAPEIFRRELAVAETEVGRKVTCMLTDAFIWFAGDMAAEMKVSWVAFWTSGTRSLLISTQISSEKQSLSKETLGCISGMEKIRVKDTPEGVVFGNLDSVFSKMLHQMGLALPRATTVYMNSFEELDPTLTDNLRLKFKRYLSIGPLALLFSTSQRETPLHDPHGCLAWIKKRSTASVVYIAFGRVMTPPPGELVVVAQGLESSKVPFVWSLQEKNMVHLPKGFLDGTREQGMVVPWAPQVELLNHEAMGVFVSHGGWNSVLESVSAGVPMICRPIFGDHALNARSVEAVWEIGMTISSGVFTKDGFEESLDRVLVQDDGKKMKFNAKKLKELAQEAVSTEGSSFENFKGLLDEVMKV.

Residues Ala-322 to Gln-324, His-339 to Glu-347, and Phe-361 to His-364 contribute to the UDP-alpha-D-glucose site.

The protein belongs to the UDP-glycosyltransferase family.

The protein is UDP-glycosyltransferase 78D4 (UGT78D4) of Arabidopsis thaliana (Mouse-ear cress).